Consider the following 244-residue polypeptide: 2-C-methyl-D-erythritol 4-phosphate cytidylyltransferase (244 aa).

The protein belongs to the IspD/TarI cytidylyltransferase family. IspD subfamily.

The catalysed reaction is 2-C-methyl-D-erythritol 4-phosphate + CTP + H(+) = 4-CDP-2-C-methyl-D-erythritol + diphosphate. It functions in the pathway isoprenoid biosynthesis; isopentenyl diphosphate biosynthesis via DXP pathway; isopentenyl diphosphate from 1-deoxy-D-xylulose 5-phosphate: step 2/6. Functionally, catalyzes the formation of 4-diphosphocytidyl-2-C-methyl-D-erythritol from CTP and 2-C-methyl-D-erythritol 4-phosphate (MEP). The polypeptide is 2-C-methyl-D-erythritol 4-phosphate cytidylyltransferase (Solibacter usitatus (strain Ellin6076)).